A 388-amino-acid polypeptide reads, in one-letter code: Quinolone resistance protein NorA (388 aa).

Transmembrane regions (helical) follow at residues 5–25, 42–62, 69–89, 99–119, 129–149, 157–177, 201–221, 239–259, 269–289, 293–313, 331–351, and 355–375; these read IFVLYFNIFLIFLGIGLVIPV, LLVAAFALSQMIISPFGGTLA, LIICIGLILFSVSEFMFAVGH, VIGGMSAGMVMPGVTGLIADI, FGYMSAIINSGFILGPGIGGF, MPFYFAGALGILAFIMSIVLI, WKVFITPVILTLVLSFGLSAF, DISIAITGGGIFGALFQIYFF, LTFIAWSLLYSVVVLILLVFA, WSIMLISFVVFIGFDMIRPAI, LNSTFTSMGNFIGPLIAGALF, and IEAPIYMAIGVSLAGVVIVLI.

Belongs to the major facilitator superfamily. TCR/Tet family.

The protein resides in the cell membrane. In terms of biological role, involved in quinolone resistance. May constitute a membrane-associated active efflux pump of hydrophilic quinolones. The polypeptide is Quinolone resistance protein NorA (norA) (Staphylococcus aureus (strain Mu50 / ATCC 700699)).